A 343-amino-acid chain; its full sequence is N-acetyl-gamma-glutamyl-phosphate reductase (343 aa).

Residue C149 is part of the active site.

It belongs to the NAGSA dehydrogenase family. Type 1 subfamily.

It localises to the cytoplasm. It catalyses the reaction N-acetyl-L-glutamate 5-semialdehyde + phosphate + NADP(+) = N-acetyl-L-glutamyl 5-phosphate + NADPH + H(+). The protein operates within amino-acid biosynthesis; L-arginine biosynthesis; N(2)-acetyl-L-ornithine from L-glutamate: step 3/4. In terms of biological role, catalyzes the NADPH-dependent reduction of N-acetyl-5-glutamyl phosphate to yield N-acetyl-L-glutamate 5-semialdehyde. The chain is N-acetyl-gamma-glutamyl-phosphate reductase from Exiguobacterium sibiricum (strain DSM 17290 / CCUG 55495 / CIP 109462 / JCM 13490 / 255-15).